A 266-amino-acid chain; its full sequence is Signal peptidase I (266 aa).

The Cytoplasmic segment spans residues 1–20 (MQTDNTKSNTNKTAKQEWWS). Residues 21 to 41 (CAFVICIALLIRILIMEPFTV) form a helical membrane-spanning segment. The Periplasmic segment spans residues 42-266 (PTGSMKATIL…IFRNLYNTDE (225 aa)). Catalysis depends on residues serine 45 and lysine 108.

It belongs to the peptidase S26 family.

The protein localises to the cell inner membrane. The catalysed reaction is Cleavage of hydrophobic, N-terminal signal or leader sequences from secreted and periplasmic proteins.. The polypeptide is Signal peptidase I (lepB) (Rickettsia akari (strain Hartford)).